An 899-amino-acid chain; its full sequence is Androgen receptor (899 aa).

A modulating region spans residues 1 to 537; sequence MEVQLGLGRV…PIDYYFPPQK (537 aa). The tract at residues 1-566 is interaction with ZNF318; it reads MEVQLGLGRV…GSCKVFFKRA (566 aa). Disordered regions lie at residues 35–146 and 175–222; these read QNPG…LSLL and QQQQ…LGGN. Ser61 is subject to Phosphoserine; by CDK9. Ser75 carries the phosphoserine modification. Low complexity-rich tracts occupy residues 94-103 and 175-193; these read QPSQQQAASE and QQQQ…QQQQ. The segment covering 210–222 has biased composition (polar residues); that stretch reads APSSSKDSYLGGN. Tyr218 is modified (phosphotyrosine; by CSK). The residue at position 251 (Ser251) is a Phosphoserine. Tyr262 is modified (phosphotyrosine; by CSK and TNK2). Residues Tyr302, Tyr341, Tyr352, and Tyr357 each carry the phosphotyrosine; by CSK modification. Tyr358 carries the post-translational modification Phosphotyrosine; by CSK and TNK2. Lys381 participates in a covalent cross-link: Glycyl lysine isopeptide (Lys-Gly) (interchain with G-Cter in SUMO). Position 388 is a phosphotyrosine; by CSK (Tyr388). The tract at residues 436–471 is disordered; that stretch reads EGQLYGPGGGGGSSSPSDAGPVAPYGYTRPPQGLTS. Lys500 is covalently cross-linked (Glycyl lysine isopeptide (Lys-Gly) (interchain with G-Cter in SUMO)). Residues Tyr514 and Tyr531 each carry the phosphotyrosine; by CSK modification. The segment at 531–898 is interaction with LPXN; sequence YYFPPQKTCL…GKVKPIYFHT (368 aa). Residues 538 to 611 constitute a DNA-binding region (nuclear receptor); sequence TCLICGDEAS…AGMTLGARKL (74 aa). 2 NR C4-type zinc fingers span residues 539 to 559 and 575 to 599; these read CLIC…CGSC and CASR…LRKC. The tract at residues 551 to 641 is interaction with HIPK3; that stretch reads YGALTCGSCK…TEDPSQKMTV (91 aa). The segment at 571 to 898 is interaction with CCAR1; that stretch reads QKYLCASRND…GKVKPIYFHT (328 aa). Residues 604–898 are interaction with KAT7; the sequence is MTLGARKLKK…GKVKPIYFHT (295 aa). Ser630 is subject to Phosphoserine. Residues 648–879 form the NR LBD domain; sequence ECQPIFLNVL…DFPEMMAEII (232 aa). Residues Asn685 and Arg732 each contribute to the 17beta-hydroxy-5alpha-androstan-3-one site. Glycyl lysine isopeptide (Lys-Gly) (interchain with G-Cter in ubiquitin) cross-links involve residues Lys825 and Lys827. Thr857 contributes to the 17beta-hydroxy-5alpha-androstan-3-one binding site. Phosphotyrosine; by CSK is present on Tyr895.

It belongs to the nuclear hormone receptor family. NR3 subfamily. In terms of assembly, binds DNA as a homodimer. Part of a ternary complex containing AR, EFCAB6/DJBP and PARK7. Interacts with HIPK3 and NR0B2 in the presence of androgen. The ligand binding domain interacts with KAT7/HBO1 in the presence of dihydrotestosterone. Interacts with EFCAB6/DJBP, PQBP1, RANBP9, SPDEF, SRA1, TGFB1I1, ZNF318 and RREB1. The AR N-terminal poly-Gln region binds Ran resulting in enhancement of AR-mediated transactivation. Ran-binding decreases as the poly-Gln length increases. Interacts with ZMIZ1/ZIMP10 and ZMIZ2/ZMIP7 which both enhance its transactivation activity. Interacts with RBAK. Interacts via the ligand-binding domain with LXXLL and FXXLF motifs from NCOA1, NCOA2, NCOA3 and MAGEA11. Interacts (via nuclear receptor DNA binding domain and nuclear receptor ligand binding domain) with NCOA4. Interacts with HIP1 (via coiled coil domain). Interacts with SLC30A9 and RAD54L2/ARIP4. Interacts with MACROD1 (via macro domain). Interacts (via ligand-binding domain) with TRIM68. Interacts with TNK2. Interacts with USP26. Interacts with RNF6. Interacts (regulated by RNF6 probably through polyubiquitination) with RNF14; regulates AR transcriptional activity. Interacts with PRMT2 and TRIM24. Interacts with RACK1. Interacts with RANBP10; this interaction enhances hormone-induced AR transcriptional activity. Interacts with PRPF6 in a hormone-independent way; this interaction enhances hormone-induced AR transcriptional activity. Interacts with STK4/MST1. Interacts with ZIPK/DAPK3. Interacts with LPXN. Interacts with MAK. Part of a complex containing AR, MAK and NCOA3. Interacts with CRY1. Interacts with CCAR1 and GATA2. Interacts with BUD31. Interacts with ARID4A. Interacts with ARID4B. Interacts (via NR LBD domain) with ZBTB7A; the interaction is direct and androgen-dependent. Interacts with NCOR1. Interacts with NCOR2. Interacts with CRY2 in a ligand-dependent manner. Phosphorylated in prostate cancer cells in response to several growth factors including EGF. Phosphorylation is induced by c-Src kinase (CSK). Tyr-514 is one of the major phosphorylation sites and an increase in phosphorylation and Src kinase activity is associated with prostate cancer progression. Phosphorylation by TNK2 enhances the DNA-binding and transcriptional activity. Phosphorylation at Ser-61 by CDK9 regulates AR promoter selectivity and cell growth. Phosphorylation by PAK6 leads to AR-mediated transcription inhibition. In terms of processing, sumoylated on Lys-381 (major) and Lys-500. Ubiquitinated. Deubiquitinated by USP26. 'Lys-6' and 'Lys-27'-linked polyubiquitination by RNF6 modulates AR transcriptional activity and specificity. Post-translationally, palmitoylated by ZDHHC7 and ZDHHC21. Palmitoylation is required for plasma membrane targeting and for rapid intracellular signaling via ERK and AKT kinases and cAMP generation.

The protein resides in the nucleus. Its subcellular location is the cytoplasm. Steroid hormone receptors are ligand-activated transcription factors that regulate eukaryotic gene expression and affect cellular proliferation and differentiation in target tissues. Transcription factor activity is modulated by bound coactivator and corepressor proteins like ZBTB7A that recruits NCOR1 and NCOR2 to the androgen response elements/ARE on target genes, negatively regulating androgen receptor signaling and androgen-induced cell proliferation. Transcription activation is also down-regulated by NR0B2. Activated, but not phosphorylated, by HIPK3 and ZIPK/DAPK3. In Mus musculus (Mouse), this protein is Androgen receptor (Ar).